The primary structure comprises 885 residues: DNA mismatch repair protein MutS (885 aa).

626 to 633 lines the ATP pocket; the sequence is GPNMGGKS.

This sequence belongs to the DNA mismatch repair MutS family.

In terms of biological role, this protein is involved in the repair of mismatches in DNA. It is possible that it carries out the mismatch recognition step. This protein has a weak ATPase activity. In Burkholderia cenocepacia (strain HI2424), this protein is DNA mismatch repair protein MutS.